Here is a 421-residue protein sequence, read N- to C-terminus: MNIINLINKKQRGKALNLAEINWFVNAVLNKTIADYQITAFLMAIWFKGMNPNELFLLTKAMVDTGEIIKFNHHGKISVDKHSTGGIGDKVSLALVPILTSLGFSVAKLSGRGLGYTGGTIDKLEAVGVKTELTDQQAQACLDKNDCFIIGQSKDIAPVDKVLYGLRDITGTVDSLPLIASSIMSKKLAVMNEYIFIDLKYGKGAFCKTKKIANELAKLMQSIAKSFKRKLSVKLSDMNQVLGKAVGNVIEVNEAVNFLKQDLDQVGQDFIDLMQTIVINILLETKQAKTKQKAIELYQDVLTSKKAWNRFLSFIESQGGNVELFTQKEGFFKPKYKASIKAEKSGILHFTDPIDLAKIGINLGAGRMKKTDQIDPMAGLFLMKKDNESVAVGDTVLNLYSSSPISNEYISAAQKTIIINK.

The protein belongs to the thymidine/pyrimidine-nucleoside phosphorylase family. As to quaternary structure, homodimer.

The enzyme catalyses thymidine + phosphate = 2-deoxy-alpha-D-ribose 1-phosphate + thymine. Functionally, the enzymes which catalyze the reversible phosphorolysis of pyrimidine nucleosides are involved in the degradation of these compounds and in their utilization as carbon and energy sources, or in the rescue of pyrimidine bases for nucleotide synthesis. The sequence is that of Thymidine phosphorylase (deoA) from Mycoplasma genitalium (strain ATCC 33530 / DSM 19775 / NCTC 10195 / G37) (Mycoplasmoides genitalium).